Here is a 74-residue protein sequence, read N- to C-terminus: Conotoxin ca17a (74 aa).

A signal peptide spans 1–20; sequence MQKATVLLLALLLLLPLSTA. Positions 21–40 are excised as a propeptide; sequence QDAEGSQEDAAQREVDIATR. Position 51 is a 4-hydroxyproline (proline 51).

In terms of processing, contains disulfide bonds. Expressed by the venom gland.

The protein resides in the secreted. This Conus caracteristicus (Characteristic cone) protein is Conotoxin ca17a.